Reading from the N-terminus, the 206-residue chain is Pyridoxine/pyridoxamine 5'-phosphate oxidase (206 aa).

FMN-binding positions include 53 to 58, 68 to 69, Lys-75, and Gln-97; these read RMVLLK and YT. Lys-58 lines the substrate pocket. 3 residues coordinate substrate: Tyr-115, Arg-119, and Ser-123. Residues 132-133 and Trp-177 contribute to the FMN site; that span reads QS. A substrate-binding site is contributed by 183–185; the sequence is RLH. Residue Arg-187 coordinates FMN.

It belongs to the pyridoxamine 5'-phosphate oxidase family. In terms of assembly, homodimer. Requires FMN as cofactor.

The catalysed reaction is pyridoxamine 5'-phosphate + O2 + H2O = pyridoxal 5'-phosphate + H2O2 + NH4(+). It catalyses the reaction pyridoxine 5'-phosphate + O2 = pyridoxal 5'-phosphate + H2O2. Its pathway is cofactor metabolism; pyridoxal 5'-phosphate salvage; pyridoxal 5'-phosphate from pyridoxamine 5'-phosphate: step 1/1. The protein operates within cofactor metabolism; pyridoxal 5'-phosphate salvage; pyridoxal 5'-phosphate from pyridoxine 5'-phosphate: step 1/1. Its function is as follows. Catalyzes the oxidation of either pyridoxine 5'-phosphate (PNP) or pyridoxamine 5'-phosphate (PMP) into pyridoxal 5'-phosphate (PLP). This is Pyridoxine/pyridoxamine 5'-phosphate oxidase from Agrobacterium fabrum (strain C58 / ATCC 33970) (Agrobacterium tumefaciens (strain C58)).